The following is a 267-amino-acid chain: Non-homologous end joining protein Ku (267 aa).

The Ku domain occupies 11–195 (AVGQVSCAVA…KVKGEMLELA (185 aa)). The interval 229–267 (GRKPKRKAAPKKAREPSDLMAALRESVAATERPRRRKAG) is disordered.

The protein belongs to the prokaryotic Ku family. Homodimer. Interacts with LigD.

Its function is as follows. With LigD forms a non-homologous end joining (NHEJ) DNA repair enzyme, which repairs dsDNA breaks with reduced fidelity. Binds linear dsDNA with 5'- and 3'- overhangs but not closed circular dsDNA nor ssDNA. Recruits and stimulates the ligase activity of LigD. The sequence is that of Non-homologous end joining protein Ku from Cereibacter sphaeroides (strain KD131 / KCTC 12085) (Rhodobacter sphaeroides).